A 141-amino-acid polypeptide reads, in one-letter code: Galactose-6-phosphate isomerase subunit LacA 1 (141 aa).

Belongs to the LacAB/RpiB family. Heteromultimeric protein consisting of LacA and LacB.

It carries out the reaction aldehydo-D-galactose 6-phosphate = keto-D-tagatose 6-phosphate. The protein operates within carbohydrate metabolism; D-galactose 6-phosphate degradation; D-tagatose 6-phosphate from D-galactose 6-phosphate: step 1/1. The polypeptide is Galactose-6-phosphate isomerase subunit LacA 1 (Streptococcus pyogenes serotype M1).